We begin with the raw amino-acid sequence, 365 residues long: D-alanine--D-alanine ligase (365 aa).

The region spanning 140–346 (KKILRRHGLQ…YSQLLTDLIY (207 aa)) is the ATP-grasp domain. 173–228 (EKQLSYPIFVKPANLGSSVGISKVKNREELIQGIDLAVKYDMKCLAEEFIPGKEIE) contributes to the ATP binding site. Mg(2+)-binding residues include aspartate 299, glutamate 313, and asparagine 315.

The protein belongs to the D-alanine--D-alanine ligase family. Mg(2+) serves as cofactor. The cofactor is Mn(2+).

The protein localises to the cytoplasm. It catalyses the reaction 2 D-alanine + ATP = D-alanyl-D-alanine + ADP + phosphate + H(+). The protein operates within cell wall biogenesis; peptidoglycan biosynthesis. Cell wall formation. This chain is D-alanine--D-alanine ligase, found in Natranaerobius thermophilus (strain ATCC BAA-1301 / DSM 18059 / JW/NM-WN-LF).